The following is a 326-amino-acid chain: uncharacterized protein (326 aa).

The segment at 293–326 (HRNYDANHSTSGEEENSGSRSRIAELSQSTIHRR) is disordered.

This is an uncharacterized protein from Oryza latifolia (Indian wild rice).